Here is a 367-residue protein sequence, read N- to C-terminus: MAPTKDSVIHMGAESWDEISEFVTKKGHGVKGLSELGIKTLPKQFHQPLEERFSEKKILERASIPLIDMSKWDSPEVVKSICDAAEHWGFFQIVNHGVPLETLQRVKEATHRFFALPAEEKNKYSKENSPINNVRFGSSFVPHVEKALEWKDFLSMFYVSEEETNTYWPPICRDEMLEYMRSSEVLIKRLMEVLVVKGLKVKQIDEIREPMLVGSRRINLNYYPKCPNPELTLGVGRHSDISTFTILLQDEIGGLHVRKLDDTGNTWVHVTPISGSLIINIGDALQIMSNGRYKSIEHMVVANGTQDRISVPLFVNPKPQAILCPFPEVLANGEKPVYKPVLCSDYSRHFYTKPHDGKKTVDFALMN.

A Fe2OG dioxygenase domain is found at 207–317 (IREPMLVGSR…RISVPLFVNP (111 aa)). 2-oxoglutarate is bound at residue Y223. Residues H238, D240, and H298 each contribute to the Fe cation site. 2-oxoglutarate-binding residues include R308 and S310.

It belongs to the iron/ascorbate-dependent oxidoreductase family. The cofactor is L-ascorbate. It depends on Fe(2+) as a cofactor.

It carries out the reaction (E)-4-coumaroyl-CoA + 2-oxoglutarate + O2 = (E)-2,4-dihydroxycinnamoyl-CoA + succinate + CO2. The enzyme catalyses (E)-feruloyl-CoA + 2-oxoglutarate + O2 = (E)-6-hydroxyferuloyl-CoA + succinate + CO2. It functions in the pathway phenylpropanoid metabolism. Its activity is regulated as follows. Repressed by the competitive inhibitor psoralen, but not by umbelliferone, xanthotoxin, bergapten and isopimpinellin. 2-oxoglutarate (OG)- and Fe(II)-dependent dioxygenase (2OGD) involved in scopoletin and umbelliferone biosynthesis. Converts feruloyl CoA into 6'-hydroxyferuloyl CoA, and p-coumaroyl CoA into 2,4-dihydroxycinnamoyl-CoA. Has no activity with cinnamic acid, caffeic acid, p-coumaric acid, ferulic acid, cinnamoyl-CoA and caffeoyl-CoA. This is Bi-functional coumaroyl CoA and feruloyl CoA ortho-hydroxylase Diox4 from Ruta graveolens (Common rue).